A 187-amino-acid polypeptide reads, in one-letter code: MVIDKNKIEQAIRLFLEGIGEDPNREGLRDTPKRVAKMWEEFESYREMNMTIFEEVGSYDEMVVVRDIQFYSLCEHHLLPFFGKAHVAYIPDKKVCGLSKIVRVVNKFSYRPQVQERLTAEIAEYLEKELQPKGVAVVMEAVHLCMAMRGVRNPESITVTSKLTGRFLECQKTREEFLNLINSHKKM.

Zn(2+)-binding residues include cysteine 74, histidine 77, and cysteine 145.

It belongs to the GTP cyclohydrolase I family. In terms of assembly, homomer.

It carries out the reaction GTP + H2O = 7,8-dihydroneopterin 3'-triphosphate + formate + H(+). The protein operates within cofactor biosynthesis; 7,8-dihydroneopterin triphosphate biosynthesis; 7,8-dihydroneopterin triphosphate from GTP: step 1/1. This chain is GTP cyclohydrolase 1, found in Sulfurihydrogenibium sp. (strain YO3AOP1).